A 206-amino-acid polypeptide reads, in one-letter code: Adenine phosphoribosyltransferase (206 aa).

The protein belongs to the purine/pyrimidine phosphoribosyltransferase family. Homodimer.

Its subcellular location is the cytoplasm. It catalyses the reaction AMP + diphosphate = 5-phospho-alpha-D-ribose 1-diphosphate + adenine. The protein operates within purine metabolism; AMP biosynthesis via salvage pathway; AMP from adenine: step 1/1. Its function is as follows. Catalyzes a salvage reaction resulting in the formation of AMP, that is energically less costly than de novo synthesis. This chain is Adenine phosphoribosyltransferase, found in Rhodopirellula baltica (strain DSM 10527 / NCIMB 13988 / SH1).